Reading from the N-terminus, the 700-residue chain is Non-hemolytic phospholipase C (700 aa).

The segment at residues 1-34 (MTNQNRRDFLRLAAGTAGAAALQLFPPVIREALA) is a signal peptide (tat-type signal).

It belongs to the bacterial phospholipase C family. Predicted to be exported by the Tat system. The position of the signal peptide cleavage has not been experimentally proven.

The enzyme catalyses a 1,2-diacyl-sn-glycero-3-phosphocholine + H2O = phosphocholine + a 1,2-diacyl-sn-glycerol + H(+). In terms of biological role, hydrolyzes phosphatidylserine as well as phosphatidylcholine. The protein is Non-hemolytic phospholipase C (plcN) of Burkholderia pseudomallei (strain K96243).